A 432-amino-acid polypeptide reads, in one-letter code: D-amino acid dehydrogenase (432 aa).

3 to 17 (VVILGSGVVGVTSAW) contributes to the FAD binding site.

Belongs to the DadA oxidoreductase family. Requires FAD as cofactor.

It carries out the reaction a D-alpha-amino acid + A + H2O = a 2-oxocarboxylate + AH2 + NH4(+). It functions in the pathway amino-acid degradation; D-alanine degradation; NH(3) and pyruvate from D-alanine: step 1/1. Oxidative deamination of D-amino acids. The polypeptide is D-amino acid dehydrogenase (Salmonella dublin (strain CT_02021853)).